A 51-amino-acid polypeptide reads, in one-letter code: Sperm protamine P1 (51 aa).

This sequence belongs to the protamine P1 family. As to quaternary structure, cross-linked by interchain disulfide bonds around the DNA-helix. As to expression, testis.

Its subcellular location is the nucleus. It localises to the chromosome. Functionally, protamines substitute for histones in the chromatin of sperm during the haploid phase of spermatogenesis. They compact sperm DNA into a highly condensed, stable and inactive complex. The protein is Sperm protamine P1 (PRM1) of Hylobates lar (Lar gibbon).